The following is a 411-amino-acid chain: Receptor GIN3 (411 aa).

The Extracellular portion of the chain corresponds to 1-99; it reads MSGFVAGEEA…LLPILPHPRN (99 aa). Residues 100–120 traverse the membrane as a helical segment; that stretch reads IPIIVPLFCVFTVMTSLAVGL. Residues 121–134 lie on the Cytoplasmic side of the membrane; the sequence is RLWSRQKVAGGIRS. The helical transmembrane segment at 135–155 threads the bilayer; the sequence is FDWLALAGFGLTIIYGAVSVY. The Extracellular portion of the chain corresponds to 156 to 181; it reads HSKVSGPYQAFYDRTWDQMKENYKVY. The helical transmembrane segment at 182 to 202 threads the bilayer; it reads LVLTIMYPFIMGLIKISLLLF. At 203 to 227 the chain is on the cytoplasmic side; it reads YYRVATLNYVQWAVYATGSLTIANS. Residues 228–248 traverse the membrane as a helical segment; that stretch reads IAAIITHCLAFMPIDFWNHFL. At 249–262 the chain is on the extracellular side; that stretch reads QSPFKFNSRTPMLV. Residues 263-283 form a helical membrane-spanning segment; it reads FGAVYILTDVAILIIPMPMVF. At 284–292 the chain is on the cytoplasmic side; that stretch reads QLKLYPREK. A helical transmembrane segment spans residues 293-313; that stretch reads VIAVIAFSLGGVACVASGFRI. Residues 314–328 lie on the Extracellular side of the membrane; sequence WAIDEFQNYSGKNSS. N-linked (GlcNAc...) asparagine glycosylation is found at Asn321 and Asn326. Residues 329–349 traverse the membrane as a helical segment; sequence GLMIDAWTMIELNLTLICASA. Residues 350–411 lie on the Cytoplasmic side of the membrane; sequence PAIRALAIHY…QSPVIPKEVV (62 aa). The disordered stretch occupies residues 371-411; that stretch reads FSSSGATRGSKSAGSSGKSKTPESEKSMQVSQSPVIPKEVV. Residues 372–389 are compositionally biased toward low complexity; the sequence is SSSGATRGSKSAGSSGKS.

The protein belongs to the SAT4 family. In terms of assembly, interacts with guanine nucleotide-binding protein alpha GPA2; to activate adenylate cyclase and positively regulate nematode trap formation.

The protein localises to the cell membrane. Functionally, receptor that senses nematode-derived signals at the cell surface and signals via adenylate cyclase to positively regulate trap formation for nematode capture. The chain is Receptor GIN3 from Arthrobotrys oligospora (strain ATCC 24927 / CBS 115.81 / DSM 1491) (Nematode-trapping fungus).